The sequence spans 109 residues: UPF0482 protein ESA_01750 (109 aa).

An N-terminal signal peptide occupies residues 1 to 24 (MNKFLRHSLLLALLTGALSGVANA). The segment covering 38-55 (RTRQDAAMDKEQWNDTRS) has biased composition (basic and acidic residues). Positions 38–63 (RTRQDAAMDKEQWNDTRSLRQKVNKR) are disordered.

The protein belongs to the UPF0482 family.

The chain is UPF0482 protein ESA_01750 from Cronobacter sakazakii (strain ATCC BAA-894) (Enterobacter sakazakii).